We begin with the raw amino-acid sequence, 591 residues long: Inactive metallocarboxypeptidase ECM14 (591 aa).

Positions 1-21 (MRLFARLEVLAILACAVPIAA) are cleaved as a signal peptide. The propeptide occupies 22–175 (IPSFLSNSYP…QTIYESYPSS (154 aa)). Residues 203-523 (DYQPFSVIVT…NAVMVLGRFL (321 aa)) enclose the Peptidase M14 domain. Positions 265 and 268 each coordinate Zn(2+). Residues 265–268 (HARE), Arg323, and 340–341 (DR) each bind substrate. Cysteines 334 and 357 form a disulfide. N-linked (GlcNAc...) asparagine glycosylation is found at Asn350 and Asn381. His397 serves as a coordination point for Zn(2+). 398–399 (SY) lines the substrate pocket. The segment covering 533-543 (DWEDESQRPKA) has biased composition (basic and acidic residues). The interval 533–591 (DWEDESQRPKADEDDIPSENELGENDDSWIPFDYRNHDDQNEGEGYDNDEWGFRRRRKG) is disordered. 2 stretches are compositionally biased toward acidic residues: residues 544–559 (DEDD…ENDD) and 573–582 (NEGEGYDNDE).

Belongs to the peptidase M14 family. Zn(2+) serves as cofactor.

It is found in the vacuole. The protein resides in the secreted. Functionally, inactive carboxypeptidase that may play a role in cell wall organization and biogenesis. The chain is Inactive metallocarboxypeptidase ECM14 (ECM14) from Paracoccidioides lutzii (strain ATCC MYA-826 / Pb01) (Paracoccidioides brasiliensis).